A 418-amino-acid chain; its full sequence is Glutamyl-tRNA reductase (418 aa).

Substrate is bound by residues 49-52 (TCNR), Ser-109, 114-116 (EPQ), and Gln-120. Catalysis depends on Cys-50, which acts as the Nucleophile. 189-194 (GAGETI) is an NADP(+) binding site.

Belongs to the glutamyl-tRNA reductase family. As to quaternary structure, homodimer.

The enzyme catalyses (S)-4-amino-5-oxopentanoate + tRNA(Glu) + NADP(+) = L-glutamyl-tRNA(Glu) + NADPH + H(+). The protein operates within porphyrin-containing compound metabolism; protoporphyrin-IX biosynthesis; 5-aminolevulinate from L-glutamyl-tRNA(Glu): step 1/2. In terms of biological role, catalyzes the NADPH-dependent reduction of glutamyl-tRNA(Glu) to glutamate 1-semialdehyde (GSA). The polypeptide is Glutamyl-tRNA reductase (Escherichia coli O7:K1 (strain IAI39 / ExPEC)).